Consider the following 309-residue polypeptide: MNQENTQIVAAFYKFVSLPDFAEKQEPLLAYCLAQNIKGTILLAKEGINGTIAGSRLSIDNVLSYLRSDLRLQDLEHKESTADTPPFERMKVRLKKEIVTLGLPEVDPNEQVGAYVTPEEWNELISDPEVIVIDTRNDYEVHIGTFQGAQNPQTNSFRDFPEYVRQNLDPNQHKKVAMFCTGGIRCEKASSFMLSQGFAEVYHLKGGILKYLEQIPPEESLWQGECFVFDERIAVVHGLEPGTHELCFCCGHPLAEEDKASLQYEEGISCPHCFDSLTEDKRMRQQEKWRQYQLKNSHSLGNSKLGVAD.

Positions 126 to 220 (SDPEVIVIDT…YLEQIPPEES (95 aa)) constitute a Rhodanese domain. Cys-180 serves as the catalytic Cysteine persulfide intermediate.

Belongs to the TrhO family.

It carries out the reaction uridine(34) in tRNA + AH2 + O2 = 5-hydroxyuridine(34) in tRNA + A + H2O. Catalyzes oxygen-dependent 5-hydroxyuridine (ho5U) modification at position 34 in tRNAs. This chain is tRNA uridine(34) hydroxylase, found in Nostoc sp. (strain PCC 7120 / SAG 25.82 / UTEX 2576).